Here is a 591-residue protein sequence, read N- to C-terminus: CTP synthase 1-B (591 aa).

The region spanning 300 to 554 is the Glutamine amidotransferase type-1 domain; sequence SIALVGKYTK…LASVGRLSQY (255 aa). Residues cysteine 399, histidine 526, and glutamate 528 each act as for GATase activity in the active site. Residues 562–572 are compositionally biased toward basic and acidic residues; the sequence is SPRDTYSDRSE. Residues 562 to 581 form a disordered region; sequence SPRDTYSDRSENSSPDAEIA.

The protein belongs to the CTP synthase family.

The catalysed reaction is UTP + L-glutamine + ATP + H2O = CTP + L-glutamate + ADP + phosphate + 2 H(+). It participates in pyrimidine metabolism; CTP biosynthesis via de novo pathway; CTP from UDP: step 2/2. Functionally, this enzyme is involved in the de novo synthesis of CTP, a precursor of DNA, RNA and phospholipids. Catalyzes the ATP-dependent amination of UTP to CTP with either L-glutamine or ammonia as a source of nitrogen. This is CTP synthase 1-B (ctps1-b) from Xenopus laevis (African clawed frog).